The sequence spans 301 residues: Small ribosomal subunit protein uS2 (301 aa).

It belongs to the universal ribosomal protein uS2 family. Component of the small ribosomal subunit. Mature ribosomes consist of a small (40S) and a large (60S) subunit. The 40S subunit contains about 33 different proteins and 1 molecule of RNA (18S). The 60S subunit contains about 49 different proteins and 3 molecules of RNA (28S, 5.8S and 5S). Interacts with ribosomal protein S21.

It localises to the cytoplasm. Required for the assembly and/or stability of the 40S ribosomal subunit. Required for the processing of the 20S rRNA-precursor to mature 18S rRNA in a late step of the maturation of 40S ribosomal subunits. In Brugia malayi (Filarial nematode worm), this protein is Small ribosomal subunit protein uS2.